We begin with the raw amino-acid sequence, 67 residues long: Probable Sec-independent protein translocase protein TatE (67 aa).

Residues 4–21 (ISITKLLVVAALVVLLFG) traverse the membrane as a helical segment.

It belongs to the TatA/E family. TatE subfamily.

It localises to the cell inner membrane. In terms of biological role, part of the twin-arginine translocation (Tat) system that transports large folded proteins containing a characteristic twin-arginine motif in their signal peptide across membranes. TatE shares overlapping functions with TatA. The protein is Probable Sec-independent protein translocase protein TatE of Enterobacter cloacae subsp. cloacae (strain ATCC 13047 / DSM 30054 / NBRC 13535 / NCTC 10005 / WDCM 00083 / NCDC 279-56).